Consider the following 239-residue polypeptide: Sugar fermentation stimulation protein homolog (239 aa).

This sequence belongs to the SfsA family.

This is Sugar fermentation stimulation protein homolog from Caulobacter vibrioides (strain ATCC 19089 / CIP 103742 / CB 15) (Caulobacter crescentus).